The sequence spans 216 residues: Pyridoxine/pyridoxamine 5'-phosphate oxidase (216 aa).

FMN contacts are provided by residues R64–K69, F79–T80, K85, K86, and Q108. K69 contacts substrate. Substrate-binding residues include Y126, R130, and S134. Residues Q143–S144 and W188 each bind FMN. R194–H196 serves as a coordination point for substrate. R198 provides a ligand contact to FMN.

It belongs to the pyridoxamine 5'-phosphate oxidase family. In terms of assembly, homodimer. The cofactor is FMN.

It catalyses the reaction pyridoxamine 5'-phosphate + O2 + H2O = pyridoxal 5'-phosphate + H2O2 + NH4(+). The enzyme catalyses pyridoxine 5'-phosphate + O2 = pyridoxal 5'-phosphate + H2O2. The protein operates within cofactor metabolism; pyridoxal 5'-phosphate salvage; pyridoxal 5'-phosphate from pyridoxamine 5'-phosphate: step 1/1. It functions in the pathway cofactor metabolism; pyridoxal 5'-phosphate salvage; pyridoxal 5'-phosphate from pyridoxine 5'-phosphate: step 1/1. In terms of biological role, catalyzes the oxidation of either pyridoxine 5'-phosphate (PNP) or pyridoxamine 5'-phosphate (PMP) into pyridoxal 5'-phosphate (PLP). The chain is Pyridoxine/pyridoxamine 5'-phosphate oxidase from Wolbachia pipientis wMel.